A 557-amino-acid polypeptide reads, in one-letter code: Multidrug transporter FLR1 (557 aa).

N-linked (GlcNAc...) asparagine glycosylation is found at Asn33, Asn48, and Asn106. Residues 44 to 57 (SESSNMSFNSGSEE) show a composition bias toward low complexity. The interval 44-67 (SESSNMSFNSGSEENSQEKSVEDL) is disordered. A run of 8 helical transmembrane segments spans residues 113-133 (ALIIIQTMLLTCVNYMGSSIY), 149-169 (VVGTLNLSLYVLGYGLGPIVF), 181-201 (LPVYMITFFLFTMLQIGCALA), 204-224 (FAGLVILRFITGVLCSPALST), 238-258 (LALVLGLWSIGAVAAPVLAPL), 271-291 (WIFWLLFFCCCATMLLLTFFF), 355-375 (LYIALCYGAFYLFFEAFPIVF), and 387-407 (GLAYFGFCVGCIFAYIILLVF). N-linked (GlcNAc...) asparagine glycosylation occurs at Asn418. The next 4 helical transmembrane spans lie at 426–446 (TLILAMCIGWCIPLALFMFGW), 450–470 (VHWILPIISEVFFVLGCFNIF), 484–506 (YVASVFAGNGFARSSFAAAFPLF), and 521–541 (VAWGSSLVGFFTIGLWVIPFV).

Belongs to the major facilitator superfamily.

It localises to the cell membrane. Multidrug transporter that confers resistance to 5-flucytosine (5-FC) and clotrimazole. Also confers resistance to benomyl, but not 4-nitroquinoline-N-oxide, cycloheximide, or fluconazole. Plays direct roles in extrusion of 5-flucytosine and clotrimazole. This is Multidrug transporter FLR1 from Candida glabrata (strain ATCC 2001 / BCRC 20586 / JCM 3761 / NBRC 0622 / NRRL Y-65 / CBS 138) (Yeast).